An 84-amino-acid chain; its full sequence is Small ribosomal subunit protein uS17 (84 aa).

This sequence belongs to the universal ribosomal protein uS17 family. Part of the 30S ribosomal subunit.

Its function is as follows. One of the primary rRNA binding proteins, it binds specifically to the 5'-end of 16S ribosomal RNA. The chain is Small ribosomal subunit protein uS17 from Clostridium botulinum (strain Okra / Type B1).